The chain runs to 764 residues: Ribosomal protein S6 kinase alpha-6 (764 aa).

Residues 1–24 (MLPFAPVEDPWDQEDMEVFGSTSS) are disordered. Residues 93-350 (FDLLKVLGQG…VEEVKRHAFF (258 aa)) enclose the Protein kinase 1 domain. ATP is bound by residues 99-107 (LGQGSFGKV) and Lys-125. Catalysis depends on Asp-218, which acts as the Proton acceptor. Phosphoserine occurs at positions 252, 392, and 409. In terms of domain architecture, AGC-kinase C-terminal spans 351 to 420 (ASIDWNKLYK…VATSIAEEYK (70 aa)). One can recognise a Protein kinase 2 domain in the interval 446–706 (YELKEDIGIG…VLKHPWITQR (261 aa)). Residues 452 to 460 (IGIGSYSVC) and Lys-475 contribute to the ATP site. Residue Asp-563 is the Proton acceptor of the active site. Residue Thr-601 is modified to Phosphothreonine.

Belongs to the protein kinase superfamily. AGC Ser/Thr protein kinase family. S6 kinase subfamily. Forms a complex with MAPK3/ERK1 but not with MAPK9 or MAPK14 in serum-starved cells. Mg(2+) is required as a cofactor. In terms of processing, phosphorylated at Ser-252, Ser-392, and Ser-409 in serum-starved cells.

The protein resides in the cytoplasm. Its subcellular location is the cytosol. The protein localises to the nucleus. The enzyme catalyses L-seryl-[protein] + ATP = O-phospho-L-seryl-[protein] + ADP + H(+). It catalyses the reaction L-threonyl-[protein] + ATP = O-phospho-L-threonyl-[protein] + ADP + H(+). Constitutively activated by phosphorylation at Ser-252, Ser-392, and Ser-409 in serum-starved cells. Does not require growth factor stimulation for significant kinase activity. Its function is as follows. Constitutively active serine/threonine-protein kinase that exhibits growth-factor-independent kinase activity and that may participate in p53/TP53-dependent cell growth arrest signaling and play an inhibitory role during embryogenesis. This is Ribosomal protein S6 kinase alpha-6 (Rps6ka6) from Mus musculus (Mouse).